The primary structure comprises 123 residues: Small ribosomal subunit protein uS13c (123 aa).

Residues 90-123 (GKRHRNNLPVRGQRTRTNARSRRGSKKTVTGKKK) form a disordered region. Basic residues predominate over residues 102 to 123 (QRTRTNARSRRGSKKTVTGKKK).

The protein belongs to the universal ribosomal protein uS13 family. Part of the 30S ribosomal subunit.

Its subcellular location is the plastid. The protein resides in the chloroplast. Functionally, located at the top of the head of the 30S subunit, it contacts several helices of the 16S rRNA. This is Small ribosomal subunit protein uS13c from Trieres chinensis (Marine centric diatom).